We begin with the raw amino-acid sequence, 160 residues long: Putative pre-16S rRNA nuclease (160 aa).

It belongs to the YqgF nuclease family.

It localises to the cytoplasm. In terms of biological role, could be a nuclease involved in processing of the 5'-end of pre-16S rRNA. The sequence is that of Putative pre-16S rRNA nuclease from Chelativorans sp. (strain BNC1).